The sequence spans 802 residues: Phenylalanine--tRNA ligase beta subunit (802 aa).

The tRNA-binding domain maps to 40–155 (SASLKNVVVG…AHVETGVNAI (116 aa)). Positions 409–484 (KAVNKIETSL…RIYGYDEIPV (76 aa)) constitute a B5 domain. D462, D468, E471, and E472 together coordinate Mg(2+). Residues 709 to 802 (PRYPEMTRDL…LQEKLNAIIR (94 aa)) form the FDX-ACB domain.

The protein belongs to the phenylalanyl-tRNA synthetase beta subunit family. Type 1 subfamily. As to quaternary structure, tetramer of two alpha and two beta subunits. It depends on Mg(2+) as a cofactor.

The protein localises to the cytoplasm. It carries out the reaction tRNA(Phe) + L-phenylalanine + ATP = L-phenylalanyl-tRNA(Phe) + AMP + diphosphate + H(+). The polypeptide is Phenylalanine--tRNA ligase beta subunit (Listeria monocytogenes serovar 1/2a (strain ATCC BAA-679 / EGD-e)).